A 74-amino-acid chain; its full sequence is MAKQDAIEMEGTVTESLPNAMFRVDLDNGFNVLAHISGKIRRNYIKILPGDRVKVELTPYDLTKGRITYRLRKK.

The S1-like domain occupies 1–72 (MAKQDAIEME…TKGRITYRLR (72 aa)).

It belongs to the IF-1 family. As to quaternary structure, component of the 30S ribosomal translation pre-initiation complex which assembles on the 30S ribosome in the order IF-2 and IF-3, IF-1 and N-formylmethionyl-tRNA(fMet); mRNA recruitment can occur at any time during PIC assembly.

The protein resides in the cytoplasm. Its function is as follows. One of the essential components for the initiation of protein synthesis. Stabilizes the binding of IF-2 and IF-3 on the 30S subunit to which N-formylmethionyl-tRNA(fMet) subsequently binds. Helps modulate mRNA selection, yielding the 30S pre-initiation complex (PIC). Upon addition of the 50S ribosomal subunit IF-1, IF-2 and IF-3 are released leaving the mature 70S translation initiation complex. The protein is Translation initiation factor IF-1 of Acaryochloris marina (strain MBIC 11017).